The sequence spans 380 residues: Shedu protein SduA (380 aa).

Functionally, only component of antiviral defense system Shedu. Expression of Shedu in B.subtilis (strain BEST7003) confers resistance to phages phi105, phi29, rho14 and to a lesser extent to SPP1. May be an endonuclease. This is Shedu protein SduA from Bacillus cereus (strain B4264).